Here is a 405-residue protein sequence, read N- to C-terminus: Phosphoglycerate kinase (405 aa).

Residues 21-23, Arg-36, 59-62, Arg-119, and Arg-161 each bind substrate; these read DFN and HLGR. ATP contacts are provided by residues Lys-212, Gly-301, Glu-332, and 361-364; that span reads GGDS.

The protein belongs to the phosphoglycerate kinase family. As to quaternary structure, monomer.

The protein resides in the cytoplasm. It catalyses the reaction (2R)-3-phosphoglycerate + ATP = (2R)-3-phospho-glyceroyl phosphate + ADP. It functions in the pathway carbohydrate degradation; glycolysis; pyruvate from D-glyceraldehyde 3-phosphate: step 2/5. The chain is Phosphoglycerate kinase from Leuconostoc citreum (strain KM20).